The primary structure comprises 296 residues: MKNEKIVVLYGGDSPEREVSLKSGKAVLDSLISQGYDAVGVDASGKELVAKLLELKPDKCFVALHGEDGENGRVSALLEMLEIKHTSSSMKSSVITMDKMISKEILMHHRMPTPMAKFLTDKLVAEDEISFPAAVKPSSGGSSIATFKVKSIQELKHAYEEASKYGEVMIEQWVTGKEITVAIVNDEVYSSVWIEPQNEFYDYESKYSGKSIYHSPSGLCEQKELEVRQLAKKAYDLLGCSGHARVDFIYDDRGNFYIMEINSSPGMTDNSLSPKSAAAEGVDFDSFVKRIIEQAQ.

Residues Lys103–Glu293 enclose the ATP-grasp domain. An ATP-binding site is contributed by Ile129–Thr180. Mg(2+)-binding residues include Asp247, Glu260, and Asn262.

This sequence belongs to the D-alanine--D-alanine ligase family. It depends on Mg(2+) as a cofactor. The cofactor is Mn(2+).

The protein resides in the cytoplasm. It carries out the reaction 2 D-alanine + ATP = D-alanyl-D-alanine + ADP + phosphate + H(+). It participates in cell wall biogenesis; peptidoglycan biosynthesis. Its function is as follows. Cell wall formation. The polypeptide is D-alanine--D-alanine ligase (Francisella tularensis subsp. holarctica (strain LVS)).